The sequence spans 570 residues: Urease subunit alpha (570 aa).

The region spanning 131–570 is the Urease domain; that stretch reads GGMDSHIHFI…LPMAQRYFLF (440 aa). Ni(2+) contacts are provided by His136, His138, and Lys219. Lys219 carries the post-translational modification N6-carboxylysine. His221 serves as a coordination point for substrate. 2 residues coordinate Ni(2+): His248 and His274. Catalysis depends on His322, which acts as the Proton donor. Residue Asp362 participates in Ni(2+) binding.

This sequence belongs to the metallo-dependent hydrolases superfamily. Urease alpha subunit family. In terms of assembly, heterotrimer of UreA (gamma), UreB (beta) and UreC (alpha) subunits. Three heterotrimers associate to form the active enzyme. Ni cation serves as cofactor. Carboxylation allows a single lysine to coordinate two nickel ions.

It is found in the cytoplasm. The catalysed reaction is urea + 2 H2O + H(+) = hydrogencarbonate + 2 NH4(+). It functions in the pathway nitrogen metabolism; urea degradation; CO(2) and NH(3) from urea (urease route): step 1/1. The chain is Urease subunit alpha from Allorhizobium ampelinum (strain ATCC BAA-846 / DSM 112012 / S4) (Agrobacterium vitis (strain S4)).